A 953-amino-acid polypeptide reads, in one-letter code: Translation initiation factor IF-2 (953 aa).

2 disordered regions span residues 52–241 (KASK…QQEA) and 279–363 (TKLK…TERK). Composition is skewed to basic and acidic residues over residues 80-89 (TGSEHVEKTQ), 98-111 (FKAE…EQAA), and 140-188 (QGDK…ENHK). A compositionally biased stretch (polar residues) spans 191-207 (RFTNQKKQGRQEPQSKS). Over residues 229–241 (RQSETRFRAQQEA) the composition is skewed to basic and acidic residues. Polar residues predominate over residues 282-291 (KSSNISAKST). Positions 300–317 (ARPEKNRELTHHSQEGQK) are enriched in basic and acidic residues. A compositionally biased stretch (low complexity) spans 322 to 338 (SWNSQNQVRNQKNSNWN). A compositionally biased stretch (basic residues) spans 339–348 (KNKKTKKGKN). A tr-type G domain is found at 454-623 (ERAPVVTIMG…LLVAEVEELK (170 aa)). Residues 463–470 (GHVDHGKT) form a G1 region. Position 463–470 (463–470 (GHVDHGKT)) interacts with GTP. The tract at residues 488–492 (GITQH) is G2. The segment at 509–512 (DTPG) is G3. Residues 509 to 513 (DTPGH) and 563 to 566 (NKID) each bind GTP. The tract at residues 563–566 (NKID) is G4. A G5 region spans residues 599–601 (SAK).

The protein belongs to the TRAFAC class translation factor GTPase superfamily. Classic translation factor GTPase family. IF-2 subfamily.

The protein localises to the cytoplasm. Functionally, one of the essential components for the initiation of protein synthesis. Protects formylmethionyl-tRNA from spontaneous hydrolysis and promotes its binding to the 30S ribosomal subunits. Also involved in the hydrolysis of GTP during the formation of the 70S ribosomal complex. The chain is Translation initiation factor IF-2 from Streptococcus pyogenes serotype M4 (strain MGAS10750).